The primary structure comprises 100 residues: SAGA-associated factor 11 (100 aa).

The segment at 73-94 (FQCENCGRSIAGGRFAQHMTKC) adopts an SGF11-type zinc-finger fold.

The protein belongs to the SGF11 family. In terms of assembly, component of the 1.8 MDa SAGA transcription coactivator-HAT complex. SAGA is built of 5 distinct domains with specialized functions. Within the SAGA complex, SUS1, SGF11, SGF73 and UBP8 form an additional subcomplex of SAGA called the DUB module (deubiquitination module). Interacts directly with SGF73, SUS1 and UBP8.

It localises to the nucleus. Functions as a component of the transcription regulatory histone acetylation (HAT) complex SAGA. At the promoters, SAGA is required for recruitment of the basal transcription machinery. It influences RNA polymerase II transcriptional activity through different activities such as TBP interaction and promoter selectivity, interaction with transcription activators, and chromatin modification through histone acetylation and deubiquitination. SAGA acetylates nucleosomal histone H3 to some extent (to form H3K9ac, H3K14ac, H3K18ac and H3K23ac). SAGA interacts with DNA via upstream activating sequences (UASs). Involved in transcriptional regulation of a subset of SAGA-regulated genes. Within the SAGA complex, participates in a subcomplex, that specifically deubiquitinates histones H2B. This is SAGA-associated factor 11 from Debaryomyces hansenii (strain ATCC 36239 / CBS 767 / BCRC 21394 / JCM 1990 / NBRC 0083 / IGC 2968) (Yeast).